Consider the following 268-residue polypeptide: Putative type I specificity subunit S.MpnORF365P (268 aa).

Belongs to the type-I restriction system S methylase family. As to quaternary structure, the methyltransferase is composed of M and S polypeptides.

In terms of biological role, the specificity (S) subunit of a type I methyltransferase (MTase); this subunit dictates DNA sequence specificity. The single R subunit has multiple frameshifts and is probably not expressed. This chain is Putative type I specificity subunit S.MpnORF365P, found in Mycoplasma pneumoniae (strain ATCC 29342 / M129 / Subtype 1) (Mycoplasmoides pneumoniae).